A 344-amino-acid polypeptide reads, in one-letter code: MLDNIHNLHKEATDKILSTSSLEELENIRSAYFGKSGFITVYLRNISTIKNLEERKSVGNVVNTIYSELKSLINSHRTKLHQIQIDNQLLQDKVDISLPIRPQKIGKLHPISNVLNEVKRIFLSLGFKLYDGPELEDEFHVFDALNTNKNHPAREENDTFYLKTLVNNKRVVLRTHTSSVQIRTMENNDGIYPIKVIAPGKVYRNDWDATHSPMFHQIEGLYIDKNINMGHLKYCINYFLNKFFGKNVQIRFRNSYFPFTEPSAEVDIKCNQNDWIEILGCGMVHSNVLTNVNIDPNQYSGFAFGIGIERITMLKYNISDLRKFYTNNLQWLDHYGFHFTHLTI.

Glutamate 261 contacts Mg(2+).

It belongs to the class-II aminoacyl-tRNA synthetase family. Phe-tRNA synthetase alpha subunit type 1 subfamily. In terms of assembly, tetramer of two alpha and two beta subunits. The cofactor is Mg(2+).

The protein resides in the cytoplasm. It catalyses the reaction tRNA(Phe) + L-phenylalanine + ATP = L-phenylalanyl-tRNA(Phe) + AMP + diphosphate + H(+). In Ehrlichia ruminantium (strain Gardel), this protein is Phenylalanine--tRNA ligase alpha subunit.